A 396-amino-acid chain; its full sequence is Argininosuccinate synthase (396 aa).

9-17 contributes to the ATP binding site; the sequence is AYSGGLDTS. Tyr-85 is a binding site for L-citrulline. ATP is bound at residue Gly-115. L-aspartate-binding residues include Thr-117, Asn-121, and Asp-122. Asn-121 is an L-citrulline binding site. Residues Arg-125, Ser-173, Glu-258, and Tyr-270 each coordinate L-citrulline.

This sequence belongs to the argininosuccinate synthase family. Type 1 subfamily. As to quaternary structure, homotetramer.

The protein localises to the cytoplasm. It catalyses the reaction L-citrulline + L-aspartate + ATP = 2-(N(omega)-L-arginino)succinate + AMP + diphosphate + H(+). It functions in the pathway amino-acid biosynthesis; L-arginine biosynthesis; L-arginine from L-ornithine and carbamoyl phosphate: step 2/3. The chain is Argininosuccinate synthase from Streptococcus mutans serotype c (strain ATCC 700610 / UA159).